The sequence spans 180 residues: Adenine phosphoribosyltransferase (180 aa).

Position 2 is an N-acetylserine (S2). Phosphoserine is present on residues S4, S15, and S30. Phosphotyrosine is present on Y60. Position 66 is a phosphoserine (S66). Position 114 is an N6-acetyllysine (K114). Phosphothreonine is present on T135.

Belongs to the purine/pyrimidine phosphoribosyltransferase family. Homodimer.

Its subcellular location is the cytoplasm. The enzyme catalyses AMP + diphosphate = 5-phospho-alpha-D-ribose 1-diphosphate + adenine. It functions in the pathway purine metabolism; AMP biosynthesis via salvage pathway; AMP from adenine: step 1/1. Its function is as follows. Catalyzes a salvage reaction resulting in the formation of AMP, that is energically less costly than de novo synthesis. This Mus pahari (Gairdner's shrew-mouse) protein is Adenine phosphoribosyltransferase.